The following is a 1782-amino-acid chain: AF4/FMR2 family member lilli (1782 aa).

14 disordered regions span residues 42 to 84, 150 to 313, 434 to 515, 605 to 637, 691 to 732, 768 to 820, 839 to 891, 911 to 1064, 1091 to 1126, 1166 to 1234, 1296 to 1327, 1386 to 1420, 1450 to 1484, and 1674 to 1701; these read NMED…PSEG, ASSS…PPPE, MPTP…QQQQ, GGSS…NLSR, EKLH…QQRY, GALP…LQIP, KVQP…SNKK, VAAA…AAAS, AGNS…QHKQ, LPQS…KQGQ, ARQH…TPKD, LKQE…EQLS, QESA…QQQQ, and GNTP…GKIV. Basic and acidic residues predominate over residues 54–80; it reads REKYERQQGIQSDDRETSLFGEPRRLN. Composition is skewed to low complexity over residues 164-180 and 211-260; these read QQQQ…QQQQ and PSSS…MSSP. Residues 435-447 are compositionally biased toward pro residues; it reads PTPPKASPTPPAI. Thr443 bears the Phosphothreonine mark. Residues 450–463 are compositionally biased toward basic and acidic residues; sequence MKTEKNHSLEKQDS. Residues 465–475 are compositionally biased toward acidic residues; it reads LENDLELSESD. Phosphoserine occurs at positions 472 and 474. Composition is skewed to low complexity over residues 484-515 and 609-622; these read SAGN…QQQQ and GSCM…SSSN. The span at 623–634 shows a compositional bias: polar residues; sequence KTPSPTDSNRWN. Residues 691–701 show a composition bias toward basic and acidic residues; the sequence is EKLHDEPRHVG. Low complexity-rich tracts occupy residues 714–730 and 782–805; these read QQQQ…QQQQ and SDSG…GGSS. Basic residues predominate over residues 859–869; sequence PRQKKPRKKKM. Phosphoserine occurs at positions 878 and 879. The segment at residues 920-932 is a DNA-binding region (a.T hook); it reads KKGRGRPRKQAQQ. Residues 929–972 are compositionally biased toward low complexity; that stretch reads QAQQQQQQQQQQLQQSGNLSSASASSSQAKGPTLTAAKKPLAKA. 2 positions are modified to phosphoserine: Ser949 and Ser951. Residues 973–982 are compositionally biased toward polar residues; that stretch reads SVSNSNSTAP. 4 stretches are compositionally biased toward low complexity: residues 996-1018, 1033-1064, 1105-1116, and 1174-1196; these read SNSS…TMAA, SSSS…AAAS, SVGSSSNSSSSS, and SSSD…SSSS. The span at 1308–1318 shows a compositional bias: polar residues; it reads AQQNGHLSSRS. Residues 1450–1460 show a composition bias toward polar residues; that stretch reads QESAANGSPNK. The residue at position 1457 (Ser1457) is a Phosphoserine. Low complexity-rich tracts occupy residues 1461–1484 and 1674–1694; these read LQQQ…QQQQ and GNTP…SGSN.

The protein belongs to the AF4 family.

It is found in the nucleus. Has a role in transcriptional regulation. Acts in parallel with the Ras/MAPK and the PI3K/PKB pathways in the control of cell identity and cellular growth. Essential for regulation of the cytoskeleton and cell growth but not for cell proliferation or growth rate. Required specifically for the microtubule-based basal transport of lipid droplets. Plays a partially redundant function downstream of Raf in cell fate specification in the developing eye. Pair-rule protein that regulates embryonic cellularization, gastrulation and segmentation. The protein is AF4/FMR2 family member lilli of Drosophila mojavensis (Fruit fly).